A 583-amino-acid polypeptide reads, in one-letter code: Epsin-2 (583 aa).

Residues Arg-8, Lys-11, Arg-25, Asn-30, Arg-63, and His-73 each coordinate a 1,2-diacyl-sn-glycero-3-phospho-(1D-myo-inositol-4,5-bisphosphate). In terms of domain architecture, ENTH spans 12–144 (NIVNSYSEAE…KDEERLKVER (133 aa)). The segment covering 165-181 (QITFGRGSSQPNLSISH) has biased composition (polar residues). The segment at 165–217 (QITFGRGSSQPNLSISHSEQEYGKAGGSPASYHGSTSPRVSSELEQARPQTSG) is disordered. Position 170 is an omega-N-methylarginine (Arg-170). Residues Ser-173, Ser-192, and Ser-195 each carry the phosphoserine modification. Residues 197 to 216 (HGSTSPRVSSELEQARPQTS) are compositionally biased toward polar residues. UIM domains are found at residues 218–237 (EEELQLQLALAMSREVAEQE) and 243–262 (GDDLRLQMALEESRRDTVKV). 2 disordered regions span residues 293 to 384 (SGPV…KPSP) and 411 to 457 (TSKK…PESF). 4 consecutive repeat copies span residues 301 to 303 (EPW), 313 to 315 (NPW), 326 to 328 (DPW), and 340 to 342 (DPW). Residues 301 to 315 (EPWSTGTPANQTNPW) are compositionally biased toward polar residues. The interval 301-377 (EPWSTGTPAN…SDAGKTADAW (77 aa)) is 6 X 3 AA repeats of [DE]-P-W. Over residues 346–355 (TTASIQSVPK) the composition is skewed to polar residues. 2 tandem repeats follow at residues 358-360 (DPW) and 375-377 (DAW). Ser-431 is subject to Phosphoserine. Over residues 437–448 (SQSLTSASSKPS) the composition is skewed to low complexity. Thr-453 carries the post-translational modification Phosphothreonine. 2 tandem repeats follow at residues 482 to 484 (NPF) and 496 to 498 (NPF). The tract at residues 482-581 (NPFLAPGAAA…AQPAGTTNPF (100 aa)) is 3 X 3 AA repeats of N-P-F. Phosphoserine is present on Ser-514. Copy 3 of the repeat occupies 579-581 (NPF).

This sequence belongs to the epsin family. In terms of assembly, binds AP-2 and clathrin. Interacts with ITSN1. Interacts with UBQLN2. Binds EPS15. In terms of processing, ubiquitinated. As to expression, highly expressed in brain. Detected at lower levels in lung, liver, muscle and testis.

The protein localises to the cytoplasm. Functionally, plays a role in the formation of clathrin-coated invaginations and endocytosis. The chain is Epsin-2 (Epn2) from Rattus norvegicus (Rat).